A 55-amino-acid polypeptide reads, in one-letter code: ATP synthase F(0) complex subunit 8 (55 aa).

A helical transmembrane segment spans residues 4–24 (LNPAPWFAILVFSWLVFLTVI). The segment at 34-55 (TNEPTSQSTEKAKPEPWNWPWH) is disordered.

The protein belongs to the ATPase protein 8 family. In terms of assembly, component of the ATP synthase complex composed at least of ATP5F1A/subunit alpha, ATP5F1B/subunit beta, ATP5MC1/subunit c (homooctomer), MT-ATP6/subunit a, MT-ATP8/subunit 8, ATP5ME/subunit e, ATP5MF/subunit f, ATP5MG/subunit g, ATP5MK/subunit k, ATP5MJ/subunit j, ATP5F1C/subunit gamma, ATP5F1D/subunit delta, ATP5F1E/subunit epsilon, ATP5PF/subunit F6, ATP5PB/subunit b, ATP5PD/subunit d, ATP5PO/subunit OSCP. ATP synthase complex consists of a soluble F(1) head domain (subunits alpha(3) and beta(3)) - the catalytic core - and a membrane F(0) domain - the membrane proton channel (subunits c, a, 8, e, f, g, k and j). These two domains are linked by a central stalk (subunits gamma, delta, and epsilon) rotating inside the F1 region and a stationary peripheral stalk (subunits F6, b, d, and OSCP).

Its subcellular location is the mitochondrion membrane. Its function is as follows. Subunit 8, of the mitochondrial membrane ATP synthase complex (F(1)F(0) ATP synthase or Complex V) that produces ATP from ADP in the presence of a proton gradient across the membrane which is generated by electron transport complexes of the respiratory chain. ATP synthase complex consist of a soluble F(1) head domain - the catalytic core - and a membrane F(1) domain - the membrane proton channel. These two domains are linked by a central stalk rotating inside the F(1) region and a stationary peripheral stalk. During catalysis, ATP synthesis in the catalytic domain of F(1) is coupled via a rotary mechanism of the central stalk subunits to proton translocation. In vivo, can only synthesize ATP although its ATP hydrolase activity can be activated artificially in vitro. Part of the complex F(0) domain. The sequence is that of ATP synthase F(0) complex subunit 8 from Oncorhynchus mykiss (Rainbow trout).